Consider the following 89-residue polypeptide: Small ribosomal subunit protein uS14 (89 aa).

It belongs to the universal ribosomal protein uS14 family. As to quaternary structure, part of the 30S ribosomal subunit. Contacts proteins S3 and S10.

In terms of biological role, binds 16S rRNA, required for the assembly of 30S particles and may also be responsible for determining the conformation of the 16S rRNA at the A site. The polypeptide is Small ribosomal subunit protein uS14 (Chlorobaculum tepidum (strain ATCC 49652 / DSM 12025 / NBRC 103806 / TLS) (Chlorobium tepidum)).